Here is a 352-residue protein sequence, read N- to C-terminus: C-C chemokine receptor type 5 (352 aa).

At 1-30 the chain is on the extracellular side; the sequence is MDYQVSSPTYDIDYYTSEPCQKINVKQIAA. A Sulfotyrosine modification is found at Tyr-3. 2 O-linked (GalNAc...) serine glycosylation sites follow: Ser-6 and Ser-7. Tyr-10, Tyr-14, and Tyr-15 each carry sulfotyrosine. Cystine bridges form between Cys-20/Cys-269 and Cys-101/Cys-178. A helical transmembrane segment spans residues 31–58; sequence RLLPPLYSLVFIFGFVGNILVVLILINC. Residues 59–68 are Cytoplasmic-facing; sequence KRLKSMTDIY. The chain crosses the membrane as a helical span at residues 69–89; that stretch reads LLNLAISDLLFLLTVPFWAHY. Over 90–102 the chain is Extracellular; it reads AAAQWDFGNTMCQ. A helical transmembrane segment spans residues 103 to 124; that stretch reads LLTGLYFIGFFSGIFFIILLTI. The Cytoplasmic segment spans residues 125 to 141; it reads DRYLAIVHAVFALKART. The chain crosses the membrane as a helical span at residues 142–166; that stretch reads VTFGVVTSVITWVVAVFASLPGIIF. The Extracellular portion of the chain corresponds to 167 to 198; the sequence is TRSQREGLHYTCSSHFPYSQYQFWKNFQTLKM. The helical transmembrane segment at 199–218 threads the bilayer; the sequence is VILGLVLPLLVMVICYSGIL. Topologically, residues 219–235 are cytoplasmic; that stretch reads KTLLRCRNEKKRHRAVR. A helical membrane pass occupies residues 236–260; sequence LIFTIMIVYFLFWAPYNIVLLLNTF. Residues 261–277 are Extracellular-facing; sequence QEFFGLNNCSSSNRLDQ. Residues 278–301 traverse the membrane as a helical segment; sequence AMQVTETLGMTHCCINPIIYAFVG. At 302–352 the chain is on the cytoplasmic side; it reads EKFRNYLLVFFQKHIAKRFCKCCSIFQQEAPERASSVYTRSTAEQEISVGL. S-palmitoyl cysteine attachment occurs at residues Cys-321, Cys-323, and Cys-324. 4 positions are modified to phosphoserine; by BARK1: Ser-336, Ser-337, Ser-342, and Ser-349.

Belongs to the G-protein coupled receptor 1 family. In terms of assembly, interacts with PRAF2. Efficient ligand binding to CCL3/MIP-1alpha and CCL4/MIP-1beta requires sulfation, O-glycosylation and sialic acid modifications. Glycosylation on Ser-6 is required for efficient binding of CCL4. Interacts with GRK2. Interacts with ARRB1 and ARRB2. Interacts with CNIH4. Interacts with S100A4; this interaction stimulates T-lymphocyte chemotaxis. Sulfated on at least 2 of the N-terminal tyrosines. Sulfation is required for efficient binding of the chemokines, CCL3 and CCL4. In terms of processing, palmitoylation in the C-terminal is important for cell surface expression. Post-translationally, phosphorylation on serine residues in the C-terminal is stimulated by binding CC chemokines especially by APO-RANTES. O-glycosylated, but not N-glycosylated. Ser-6 appears to be the major site even if Ser-7 may be also O-glycosylated. Also sialylated glycans present which contribute to chemokine binding. Thr-16 and Ser-17 may also be glycosylated and, if so, with small moieties such as a T-antigen.

Its subcellular location is the cell membrane. Receptor for a number of inflammatory CC-chemokines including CCL3/MIP-1-alpha, CCL4/MIP-1-beta and RANTES and subsequently transduces a signal by increasing the intracellular calcium ion level. May play a role in the control of granulocytic lineage proliferation or differentiation. Participates in T-lymphocyte migration to the infection site by acting as a chemotactic receptor. The sequence is that of C-C chemokine receptor type 5 (CCR5) from Macaca arctoides (Stump-tailed macaque).